The chain runs to 268 residues: MICOS complex subunit MIC27 (268 aa).

The N-terminal 27 residues, 1 to 27, are a transit peptide targeting the mitochondrion; the sequence is MAAIRMGKLTTMPAGLIYASVSVHAAK. The Mitochondrial intermembrane segment spans residues 28–110; sequence QEESKKQLVK…YVYLKNPPRD (83 aa). Residues 111–129 form a helical membrane-spanning segment; the sequence is FLPKMGVITVSGLAGLVSA. Residues 130–137 lie on the Mitochondrial matrix side of the membrane; that stretch reads RKGSKFKK. Residues 138–155 form a helical membrane-spanning segment; sequence ITYPLGLATLGATVCYPV. At 156 to 268 the chain is on the mitochondrial intermembrane side; that stretch reads QSVIIAKVTA…EDIDMYSTRS (113 aa). A compositionally biased stretch (basic and acidic residues) spans 187–200; that stretch reads SKEESLPKPKEKTK. The tract at residues 187 to 268 is disordered; the sequence is SKEESLPKPK…EDIDMYSTRS (82 aa). Phosphoserine is present on Ser-204. A compositionally biased stretch (basic and acidic residues) spans 249–260; sequence KLMDHGQSHPED.

It belongs to the apolipoprotein O/MICOS complex subunit Mic27 family. In terms of assembly, component of the mitochondrial contact site and cristae organizing system (MICOS) complex, composed of at least MICOS10/MIC10, CHCHD3/MIC19, CHCHD6/MIC25, APOOL/MIC27, IMMT/MIC60, APOO/MIC23/MIC26 and MICOS13/MIC13. This complex was also known under the names MINOS or MitOS complex. The MICOS complex associates with mitochondrial outer membrane proteins SAMM50, MTX1 and MTX2 (together described as components of the mitochondrial outer membrane sorting assembly machinery (SAM) complex) and DNAJC11, mitochondrial inner membrane protein TMEM11 and with HSPA9. The MICOS and SAM complexes together with DNAJC11 are part of a large protein complex spanning both membranes termed the mitochondrial intermembrane space bridging (MIB) complex. Interacts with MICOS10/MIC10, IMMT/MIC60 and APOO/MIC23/MIC26.

The protein resides in the mitochondrion inner membrane. It localises to the mitochondrion. Functionally, component of the MICOS complex, a large protein complex of the mitochondrial inner membrane that plays crucial roles in the maintenance of crista junctions, inner membrane architecture, and formation of contact sites to the outer membrane. Specifically binds to cardiolipin (in vitro) but not to the precursor lipid phosphatidylglycerol. Plays a crucial role in crista junction formation and mitochondrial function,. The polypeptide is MICOS complex subunit MIC27 (APOOL) (Homo sapiens (Human)).